The following is a 349-amino-acid chain: Flap endonuclease 1-B (349 aa).

The tract at residues 1-105 (MGIKGLTKLL…GELAKRLARR (105 aa)) is N-domain. Asp-34 contacts Mg(2+). A DNA-binding site is contributed by Arg-71. Mg(2+) contacts are provided by Asp-87, Glu-159, Glu-161, Asp-180, and Asp-182. Residues 123-254 (DMEKYSKRTV…QTALKLIRQH (132 aa)) are I-domain. Residue Glu-159 participates in DNA binding. Gly-232 and Asp-234 together coordinate DNA. Asp-234 provides a ligand contact to Mg(2+).

It belongs to the XPG/RAD2 endonuclease family. FEN1 subfamily. Interacts with PCNA. Three molecules of FEN1 bind to one PCNA trimer with each molecule binding to one PCNA monomer. PCNA stimulates the nuclease activity without altering cleavage specificity. Mg(2+) serves as cofactor. Phosphorylated. Phosphorylation upon DNA damage induces relocalization to the nuclear plasma.

The protein localises to the nucleus. Its subcellular location is the nucleolus. It is found in the nucleoplasm. The protein resides in the mitochondrion. Its function is as follows. Structure-specific nuclease with 5'-flap endonuclease and 5'-3' exonuclease activities involved in DNA replication and repair. During DNA replication, cleaves the 5'-overhanging flap structure that is generated by displacement synthesis when DNA polymerase encounters the 5'-end of a downstream Okazaki fragment. It enters the flap from the 5'-end and then tracks to cleave the flap base, leaving a nick for ligation. Also involved in the long patch base excision repair (LP-BER) pathway, by cleaving within the apurinic/apyrimidinic (AP) site-terminated flap. Acts as a genome stabilization factor that prevents flaps from equilibrating into structures that lead to duplications and deletions. Also possesses 5'-3' exonuclease activity on nicked or gapped double-stranded DNA, and exhibits RNase H activity. Also involved in replication and repair of rDNA and in repairing mitochondrial DNA. The protein is Flap endonuclease 1-B of Physcomitrium patens (Spreading-leaved earth moss).